Reading from the N-terminus, the 365-residue chain is 3-dehydroquinate synthase (365 aa).

NAD(+)-binding positions include 106–110 (GVIGD), 130–131 (TT), Lys-142, Lys-151, and 169–172 (FFAT). Glu-184, His-247, and His-264 together coordinate Zn(2+).

This sequence belongs to the sugar phosphate cyclases superfamily. Dehydroquinate synthase family. NAD(+) serves as cofactor. Requires Co(2+) as cofactor. It depends on Zn(2+) as a cofactor.

It is found in the cytoplasm. The enzyme catalyses 7-phospho-2-dehydro-3-deoxy-D-arabino-heptonate = 3-dehydroquinate + phosphate. Its pathway is metabolic intermediate biosynthesis; chorismate biosynthesis; chorismate from D-erythrose 4-phosphate and phosphoenolpyruvate: step 2/7. In terms of biological role, catalyzes the conversion of 3-deoxy-D-arabino-heptulosonate 7-phosphate (DAHP) to dehydroquinate (DHQ). This chain is 3-dehydroquinate synthase, found in Listeria monocytogenes serotype 4b (strain F2365).